The primary structure comprises 1105 residues: MHPAGEKRGGRPNDKYTAEALESIKQDLTRFEVQNNHRNNQNYTPLRYTATNGRNDALTPDYHHAKQPMEPPPSASPAPDVVIPPPPAIVGQPGAGSISVSGVGVGVVGVANGRVPKMMTALMPNKLIRKPSIERDTASSHYLRCSPALDSGAGSSRSDSPHSHHTHQPSSRTVGNPGGNGGFSPSPSGFSEVAPPAPPPRNPTACSAATPPPPVPPTSQAYVKRRSPALNNRPPAIAPPTQRGNSPVITQNGLKNPQQQLTQQLKSLNLYPGGGSGAVVEPPPPYLIQGGAGGAAPPPPPPSYTASMQSRQSPTQSQQSDYRKSPSSGIYSATSAGSPSPITVSLPPAPLAKPQPRVYQARSQQPIIMQSVKSTQVQKPVLQTAVAPQSPSSASASNSPVHVLAAPPSYPQKSAAVVQQQQQAAAAAHQQQHQHQQSKPPTPTTPPLVGLNSKPNCLEPPSYAKSMQAKAATVVQQQQQQQQQQQQVQQQQVQQQQQQQQQQLQALRVLQAQAQRERDQRERDQRERERDQQKLANGNPGRQMLPPPPYQSNNNNNSEIKPPSCNNNNIQISNSNLATTPPIPPAKYNNNSSNTGANSSGGSNGSTGTTASSSTSCKKIKHASPIPERKKISKEKEEERKEFRIRQYSPQAFKFFMEQHIENVIKSYRQRTYRKNQLEKEMHKVGLPDQTQIEMRKMLNQKESNYIRLKRAKMDKSMFVKLKPIGVGAFGEVTLVSKIDTSNHLYAMKTLRKADVLKRNQVAHVKAERDILAEADNNWVVKLYYSFQDKDNLYFVMDYIPGGDLMSLLIKLGIFEEELARFYIAEVTCAVDSVHKMGFIHRDIKPDNILIDRDGHIKLTDFGLCTGFRWTHNSKYYQENGNHSRQDSMEPWEEYSENGPKPTVLERRRMRDHQRVLAHSLVGTPNYIAPEVLERSGYTQLCDYWSVGVILYEMLVGQPPFLANSPLETQQKVINWEKTLHIPPQAELSREATDLIRRLCASADKRLGKSVDEVKSHDFFKGIDFADMRKQKAPYIPEIKHPTDTSNFDPVDPEKLRSNDSTMSSGDDVDQNDRTFHGFFEFTFRRFFDDKQPPDMTDDQAPVYV.

Over residues 33–54 (VQNNHRNNQNYTPLRYTATNGR) the composition is skewed to polar residues. Disordered regions lie at residues 33 to 81 (VQNN…APDV), 145 to 253 (CSPA…TQNG), 273 to 362 (GGGS…YQAR), 383 to 462 (QTAV…EPPS), and 514 to 643 (AQRE…RKEF). A compositionally biased stretch (pro residues) spans 69 to 81 (MEPPPSASPAPDV). The span at 242 to 253 (QRGNSPVITQNG) shows a compositional bias: polar residues. The segment covering 307-320 (SMQSRQSPTQSQQS) has biased composition (low complexity). Residues 325–343 (SPSSGIYSATSAGSPSPIT) show a composition bias toward polar residues. 2 stretches are compositionally biased toward low complexity: residues 387–400 (APQS…SNSP) and 415–437 (AAVV…QHQQ). Basic and acidic residues predominate over residues 515–533 (QRERDQRERDQRERERDQQ). 2 stretches are compositionally biased toward low complexity: residues 551-576 (QSNN…SNSN) and 589-616 (NNNS…SSTS). The segment covering 627–643 (PERKKISKEKEEERKEF) has biased composition (basic and acidic residues). One can recognise a Protein kinase domain in the interval 719 to 1020 (FVKLKPIGVG…VDEVKSHDFF (302 aa)). Residues 725-733 (IGVGAFGEV) and Lys749 contribute to the ATP site. Catalysis depends on Asp843, which acts as the Proton acceptor. Disordered stretches follow at residues 881-900 (GNHS…ENGP) and 1038-1070 (EIKH…DDVD). One can recognise an AGC-kinase C-terminal domain in the interval 1021–1091 (KGIDFADMRK…FTFRRFFDDK (71 aa)).

This sequence belongs to the protein kinase superfamily. AGC Ser/Thr protein kinase family. Interacts with yki. Interacts with jub. It depends on Mg(2+) as a cofactor.

The protein resides in the cytoplasm. It is found in the cytosol. Its subcellular location is the cytoskeleton. The protein localises to the microtubule organizing center. It localises to the centrosome. It carries out the reaction L-seryl-[protein] + ATP = O-phospho-L-seryl-[protein] + ADP + H(+). It catalyses the reaction L-threonyl-[protein] + ATP = O-phospho-L-threonyl-[protein] + ADP + H(+). In terms of biological role, negative regulator of Yorkie (Yki) in the Hippo/SWH (Sav/Wts/Hpo) signaling pathway that plays a pivotal role in organ size control and tumor suppression by restricting proliferation and promoting apoptosis. The core of this pathway is composed of a kinase cascade wherein Hippo (Hpo), in complex with its regulatory protein Salvador (Sav), phosphorylates and activates Warts (Wts) in complex with its regulatory protein Mats, which in turn phosphorylates and inactivates the Yorkie (Yki) oncoprotein. The Hippo/SWH signaling pathway inhibits the activity of the transcriptional complex formed by Scalloped (sd) and Yki and the target genes of this pathway include cyclin-E (cycE), diap1 and bantam. Inhibits nuclear localization of Yki. Regulates salivary gland degradation in a PI3K-dependent manner and Yki- and Sd-independent, mechanism. This Drosophila melanogaster (Fruit fly) protein is Serine/threonine-protein kinase Warts (wts).